A 217-amino-acid polypeptide reads, in one-letter code: Thiamine-phosphate synthase (217 aa).

Residues 39-43 (QLRRK) and N71 contribute to the 4-amino-2-methyl-5-(diphosphooxymethyl)pyrimidine site. Positions 72 and 91 each coordinate Mg(2+). S110 provides a ligand contact to 4-amino-2-methyl-5-(diphosphooxymethyl)pyrimidine. 2-[(2R,5Z)-2-carboxy-4-methylthiazol-5(2H)-ylidene]ethyl phosphate is bound at residue 137 to 139 (SPT). A 4-amino-2-methyl-5-(diphosphooxymethyl)pyrimidine-binding site is contributed by K140. Residues G173 and 193–194 (IS) contribute to the 2-[(2R,5Z)-2-carboxy-4-methylthiazol-5(2H)-ylidene]ethyl phosphate site.

It belongs to the thiamine-phosphate synthase family. Mg(2+) serves as cofactor.

The catalysed reaction is 2-[(2R,5Z)-2-carboxy-4-methylthiazol-5(2H)-ylidene]ethyl phosphate + 4-amino-2-methyl-5-(diphosphooxymethyl)pyrimidine + 2 H(+) = thiamine phosphate + CO2 + diphosphate. The enzyme catalyses 2-(2-carboxy-4-methylthiazol-5-yl)ethyl phosphate + 4-amino-2-methyl-5-(diphosphooxymethyl)pyrimidine + 2 H(+) = thiamine phosphate + CO2 + diphosphate. It catalyses the reaction 4-methyl-5-(2-phosphooxyethyl)-thiazole + 4-amino-2-methyl-5-(diphosphooxymethyl)pyrimidine + H(+) = thiamine phosphate + diphosphate. Its pathway is cofactor biosynthesis; thiamine diphosphate biosynthesis; thiamine phosphate from 4-amino-2-methyl-5-diphosphomethylpyrimidine and 4-methyl-5-(2-phosphoethyl)-thiazole: step 1/1. In terms of biological role, condenses 4-methyl-5-(beta-hydroxyethyl)thiazole monophosphate (THZ-P) and 2-methyl-4-amino-5-hydroxymethyl pyrimidine pyrophosphate (HMP-PP) to form thiamine monophosphate (TMP). This chain is Thiamine-phosphate synthase, found in Bordetella bronchiseptica (strain ATCC BAA-588 / NCTC 13252 / RB50) (Alcaligenes bronchisepticus).